We begin with the raw amino-acid sequence, 208 residues long: WEB family protein At2g17940 (208 aa).

Residues 78–113 (RTLQLNTSLSNRIKTLTQELELGKKEIQRLSRTRSS) adopt a coiled-coil conformation.

It belongs to the WEB family.

This chain is WEB family protein At2g17940, found in Arabidopsis thaliana (Mouse-ear cress).